We begin with the raw amino-acid sequence, 485 residues long: Glycogen synthase (485 aa).

K21 contributes to the ADP-alpha-D-glucose binding site.

This sequence belongs to the glycosyltransferase 1 family. Bacterial/plant glycogen synthase subfamily.

It carries out the reaction [(1-&gt;4)-alpha-D-glucosyl](n) + ADP-alpha-D-glucose = [(1-&gt;4)-alpha-D-glucosyl](n+1) + ADP + H(+). It participates in glycan biosynthesis; glycogen biosynthesis. Functionally, synthesizes alpha-1,4-glucan chains using ADP-glucose. This is Glycogen synthase from Pseudomonas savastanoi pv. phaseolicola (strain 1448A / Race 6) (Pseudomonas syringae pv. phaseolicola (strain 1448A / Race 6)).